A 103-amino-acid chain; its full sequence is G0/G1 switch protein 2 (103 aa).

Residues 80–103 are disordered; that stretch reads LQEKGKQQDTVLGGRALSNRQHAS.

As to quaternary structure, directly interacts with BCL2; this interaction prevents the formation of the anti-apoptotic BAX-BCL2 complex. Widely expressed with highest levels in peripheral blood, skeletal muscle and heart, followed by kidney and liver.

The protein localises to the mitochondrion. In terms of biological role, promotes apoptosis by binding to BCL2, hence preventing the formation of protective BCL2-BAX heterodimers. This chain is G0/G1 switch protein 2 (G0S2), found in Homo sapiens (Human).